The sequence spans 430 residues: Histidine--tRNA ligase (430 aa).

Belongs to the class-II aminoacyl-tRNA synthetase family. Homodimer.

Its subcellular location is the cytoplasm. It catalyses the reaction tRNA(His) + L-histidine + ATP = L-histidyl-tRNA(His) + AMP + diphosphate + H(+). This Acinetobacter baylyi (strain ATCC 33305 / BD413 / ADP1) protein is Histidine--tRNA ligase.